A 187-amino-acid chain; its full sequence is Transmembrane protein 11-A, mitochondrial (187 aa).

2 consecutive transmembrane segments (helical) span residues 79-95 and 102-119; these read TAVLSGTACLLTPLALP and VSLPAGVLSLACSTLYGI.

It belongs to the TMEM11 family.

It is found in the mitochondrion inner membrane. Plays a role in mitochondrial morphogenesis. This Xenopus laevis (African clawed frog) protein is Transmembrane protein 11-A, mitochondrial (tmem11-a).